The sequence spans 334 residues: Ketol-acid reductoisomerase (NADP(+)) (334 aa).

One can recognise a KARI N-terminal Rossmann domain in the interval 2 to 181; sequence TKVYYDQSVE…GATRAGVIET (180 aa). NADP(+)-binding positions include 25 to 28, R48, S52, and 82 to 85; these read YGSQ and DEIQ. H107 is a catalytic residue. G133 lines the NADP(+) pocket. Residues 182-327 enclose the KARI C-terminal knotted domain; it reads TFKEETETDL…RELRKMMPFI (146 aa). Mg(2+) contacts are provided by D190, E194, E226, and E230. S251 lines the substrate pocket.

This sequence belongs to the ketol-acid reductoisomerase family. Mg(2+) is required as a cofactor.

The catalysed reaction is (2R)-2,3-dihydroxy-3-methylbutanoate + NADP(+) = (2S)-2-acetolactate + NADPH + H(+). It carries out the reaction (2R,3R)-2,3-dihydroxy-3-methylpentanoate + NADP(+) = (S)-2-ethyl-2-hydroxy-3-oxobutanoate + NADPH + H(+). The protein operates within amino-acid biosynthesis; L-isoleucine biosynthesis; L-isoleucine from 2-oxobutanoate: step 2/4. Its pathway is amino-acid biosynthesis; L-valine biosynthesis; L-valine from pyruvate: step 2/4. Involved in the biosynthesis of branched-chain amino acids (BCAA). Catalyzes an alkyl-migration followed by a ketol-acid reduction of (S)-2-acetolactate (S2AL) to yield (R)-2,3-dihydroxy-isovalerate. In the isomerase reaction, S2AL is rearranged via a Mg-dependent methyl migration to produce 3-hydroxy-3-methyl-2-ketobutyrate (HMKB). In the reductase reaction, this 2-ketoacid undergoes a metal-dependent reduction by NADPH to yield (R)-2,3-dihydroxy-isovalerate. In Staphylococcus haemolyticus (strain JCSC1435), this protein is Ketol-acid reductoisomerase (NADP(+)).